The following is a 296-amino-acid chain: Probable deoxyuridine 5'-triphosphate nucleotidohydrolase (296 aa).

Positions 66–102 form a coiled coil; the sequence is EIDKNIVKNLEDKVNCLEQDVQYLKNELKKKDADWQQ.

This sequence belongs to the dUTPase family.

The enzyme catalyses dUTP + H2O = dUMP + diphosphate + H(+). It functions in the pathway pyrimidine metabolism; dUMP biosynthesis; dUMP from dCTP (dUTP route): step 2/2. In terms of biological role, this enzyme is involved in nucleotide metabolism: it produces dUMP, the immediate precursor of thymidine nucleotides and it decreases the intracellular concentration of dUTP so that uracil cannot be incorporated into DNA. This chain is Probable deoxyuridine 5'-triphosphate nucleotidohydrolase, found in Acheta domesticus (House cricket).